We begin with the raw amino-acid sequence, 170 residues long: 2S seed storage protein 2 (170 aa).

The N-terminal stretch at 1 to 21 is a signal peptide; that stretch reads MANKLFLVCATFALCFLLTNA. Propeptides lie at residues 22 to 37 and 73 to 88; these read SIYR…DASN and GPSL…DIEN.

Belongs to the 2S seed storage albumins family. The mature protein consists of a small and a large chain linked by disulfide bonds.

Its function is as follows. This is a 2S seed storage protein. This is 2S seed storage protein 2 (AT2S2) from Arabidopsis thaliana (Mouse-ear cress).